A 404-amino-acid polypeptide reads, in one-letter code: Deoxyguanosinetriphosphate triphosphohydrolase-like protein (404 aa).

The tract at residues 1–33 (MSVGMAAPRAAYGCDPDRSRGRQFAEPPSNNRS) is disordered. In terms of domain architecture, HD spans 69 to 217 (RLTHSLEVAQ…AAIADDIAYD (149 aa)).

Belongs to the dGTPase family. Type 2 subfamily.

The chain is Deoxyguanosinetriphosphate triphosphohydrolase-like protein from Rhodopseudomonas palustris (strain BisB5).